Reading from the N-terminus, the 1022-residue chain is MTGKVNRDLFFKLASDLREERLHAAVALIKDLSALDLPDDAEEWSYVLNRLIKGLSSDRNSARLGFSLCLTEVINLAVNMPPGQRPKGLESTNEFLSTLSTILNVNVNEGTKKSMKGKDERGILFGKLFGLKSLLNEPLFSEIFVKDLEKGNTEFFIRFTEQLIDLALKKNWIKEPCFFTLFQTMKMLLPFMDESSAEKILLIYDKYDLTLTNEGLSTYLLLKYEGDESLIPSVLDLKNPGWKDNDPLARGNLPLLTKVLRNSSVIPDANGGLKETKKQKNTNWNPRLHFVWSVLLPLFGNGKLENTSHISKKRKKTNNKKVQNSIQFPEFWKMAVDESFFNEKASSERKYLGFLIIDAAFKAVPGSYIGFCFSQNVMRTLINQSIDSQRVLNKISQLTLDSIVKACEEDSANRLVPCLNAMLFGPHGSINFDKLTKSGTVSKLIAIKELPSTVLAQLLDVFFLQLQDKKGVLSHTLFALDSILHIVRAHKVEINDMDIMKPVLRPIVYMAFFKHTSDDLKLEQLHELAKERLYSILGELTINKEIRCKDPEINSWQYLTLKLILDIENSHVGDLINPLDENLENIKNEAISCLSKVCRSRTAQSWGLSTLLSMCLVQLYAGDTDSISVIEELCEFSKHENNSMVGITEILLSLLAQKKALLRKLSLIIWQQFIEEVGLEELQILLDILKARENKQGFAQLFEGEEEFEEIKEENDASEDESKTGSESESESESDSDDADEKDEEDEANEDILNIDKEATSALVKALNLPDNIVNDKGEVDLDQLEGLSDDGGDDEDEESMDDEKMMELDDQLSEIFKRRKEALSSISTGNQRKFEVKQSRENVISFKHRVVDMLAVYVKYCEKLTLANKSEHSNNLGGSLSKLVYFIIPMLKCVNETLDRPLADKISKLLKGKIFKIKVTAFKDMNKDIELMDLLKKTHKLMLTSKPGQHAAVFYSMCSTSSLFLSKLYVEIGGNDKLDELIDLYTATTKEWMQKGKCGPNIFIDFINWLSSKKQTVMDKE.

3 stretches are compositionally biased toward acidic residues: residues 706–719 (EEFE…DASE), 728–748 (SESE…EDEA), and 781–802 (DLDQ…ESMD). Disordered stretches follow at residues 706-748 (EEFE…EDEA) and 778-805 (GEVD…DDEK). Ser789 is subject to Phosphoserine.

It belongs to the MYBBP1A family. Interacts with FRK1.

It is found in the nucleus. The protein localises to the nucleolus. The enzyme catalyses DNA(n) + a 2'-deoxyribonucleoside 5'-triphosphate = DNA(n+1) + diphosphate. Its activity is regulated as follows. Stimulated by PCNA and inhibited by aphidicolin. Functionally, plays an important role in the regulation of rRNA transcription. Binds near or at the enhancer region of rRNA repeating units. May have DNA polymerase activity, but it is not required for in vivo function. The sequence is that of rDNA transcriptional regulator POL5 from Saccharomyces cerevisiae (strain ATCC 204508 / S288c) (Baker's yeast).